The following is a 393-amino-acid chain: MSIIKITDLNLLNKKVLIRSDLNVPIKNNKISSYARIHASLPTIKFALKNLAKVIVTSHLGRPTEGIYKKKFSLFPVFKYFKKILPETNIYFSQNLTECSSIKSGELIILENVRFNQGEKENSKILSKKYATLCDIFVMDAFGAIHRNEASTNGIIKYAKLACSGLLLESELKTLNSALTNPVRPMVAIVGGAKVSTKFKTLTTLAKISDTLIVGGGIANTFISIDHNIGKSLHDPKFIEQAKILKEKYNIFIPTDSRVSTTFTYDSIATIKSTSDIHANEEIMDFGDISIKNMINIIKKAKTILWNGPIGVFEFKNFSKGTEQLSKAIASSDAFSIAGGGDTLSVVEMFKVQNNISYLSTGGGSFLKFLEGNKFRIIELLEKHFNKFKNNNF.

Substrate-binding positions include Asp-21–Asn-23, Arg-36, His-59–Arg-62, Arg-114, and Arg-147. Residues Lys-198, Glu-314, and Gly-340–Thr-343 contribute to the ATP site.

It belongs to the phosphoglycerate kinase family. As to quaternary structure, monomer.

The protein resides in the cytoplasm. The enzyme catalyses (2R)-3-phosphoglycerate + ATP = (2R)-3-phospho-glyceroyl phosphate + ADP. Its pathway is carbohydrate degradation; glycolysis; pyruvate from D-glyceraldehyde 3-phosphate: step 2/5. The polypeptide is Phosphoglycerate kinase (Buchnera aphidicola subsp. Baizongia pistaciae (strain Bp)).